A 273-amino-acid polypeptide reads, in one-letter code: Thiazole synthase (273 aa).

The active-site Schiff-base intermediate with DXP is Lys111. 1-deoxy-D-xylulose 5-phosphate contacts are provided by residues Gly172, 198–199 (AG), and 220–221 (NS). The tract at residues 251–273 (RLPRRGQASASSPTTGLISGKDK) is disordered. Residues 258–267 (ASASSPTTGL) are compositionally biased toward polar residues.

The protein belongs to the ThiG family. Homotetramer. Forms heterodimers with either ThiH or ThiS.

Its subcellular location is the cytoplasm. It catalyses the reaction [ThiS sulfur-carrier protein]-C-terminal-Gly-aminoethanethioate + 2-iminoacetate + 1-deoxy-D-xylulose 5-phosphate = [ThiS sulfur-carrier protein]-C-terminal Gly-Gly + 2-[(2R,5Z)-2-carboxy-4-methylthiazol-5(2H)-ylidene]ethyl phosphate + 2 H2O + H(+). The protein operates within cofactor biosynthesis; thiamine diphosphate biosynthesis. Catalyzes the rearrangement of 1-deoxy-D-xylulose 5-phosphate (DXP) to produce the thiazole phosphate moiety of thiamine. Sulfur is provided by the thiocarboxylate moiety of the carrier protein ThiS. In vitro, sulfur can be provided by H(2)S. The protein is Thiazole synthase of Synechococcus sp. (strain CC9902).